The chain runs to 329 residues: Transaldolase (329 aa).

The active-site Schiff-base intermediate with substrate is Lys136.

Belongs to the transaldolase family. Type 1 subfamily. Homodimer.

The protein resides in the cytoplasm. The catalysed reaction is D-sedoheptulose 7-phosphate + D-glyceraldehyde 3-phosphate = D-erythrose 4-phosphate + beta-D-fructose 6-phosphate. Its pathway is carbohydrate degradation; pentose phosphate pathway; D-glyceraldehyde 3-phosphate and beta-D-fructose 6-phosphate from D-ribose 5-phosphate and D-xylulose 5-phosphate (non-oxidative stage): step 2/3. Functionally, transaldolase is important for the balance of metabolites in the pentose-phosphate pathway. In Methylococcus capsulatus (strain ATCC 33009 / NCIMB 11132 / Bath), this protein is Transaldolase.